Consider the following 687-residue polypeptide: Glycine--tRNA ligase beta subunit (687 aa).

Belongs to the class-II aminoacyl-tRNA synthetase family. As to quaternary structure, tetramer of two alpha and two beta subunits.

The protein resides in the cytoplasm. It catalyses the reaction tRNA(Gly) + glycine + ATP = glycyl-tRNA(Gly) + AMP + diphosphate. In Geotalea daltonii (strain DSM 22248 / JCM 15807 / FRC-32) (Geobacter daltonii), this protein is Glycine--tRNA ligase beta subunit.